Consider the following 175-residue polypeptide: Vesicle-associated membrane protein-associated protein SCS22 (175 aa).

The region spanning methionine 1–isoleucine 125 is the MSP domain. Topologically, residues methionine 1–serine 154 are cytoplasmic. The tract at residues arginine 133–glycine 152 is disordered. A helical; Anchor for type IV membrane protein transmembrane segment spans residues leucine 155–tyrosine 175.

Belongs to the VAMP-associated protein (VAP) (TC 9.B.17) family.

It localises to the membrane. In terms of biological role, targets proteins containing a FFAT motif to membranes. Involved in regulation of phospholipid metabolism. The protein is Vesicle-associated membrane protein-associated protein SCS22 (SCS22) of Saccharomyces cerevisiae (strain ATCC 204508 / S288c) (Baker's yeast).